The chain runs to 317 residues: Acetyl-coenzyme A carboxylase carboxyl transferase subunit alpha (317 aa).

A CoA carboxyltransferase C-terminal domain is found at 33–294; it reads NLDDEIARLQ…KQRLLEDLAD (262 aa).

Belongs to the AccA family. In terms of assembly, acetyl-CoA carboxylase is a heterohexamer composed of biotin carboxyl carrier protein (AccB), biotin carboxylase (AccC) and two subunits each of ACCase subunit alpha (AccA) and ACCase subunit beta (AccD).

The protein localises to the cytoplasm. It carries out the reaction N(6)-carboxybiotinyl-L-lysyl-[protein] + acetyl-CoA = N(6)-biotinyl-L-lysyl-[protein] + malonyl-CoA. Its pathway is lipid metabolism; malonyl-CoA biosynthesis; malonyl-CoA from acetyl-CoA: step 1/1. In terms of biological role, component of the acetyl coenzyme A carboxylase (ACC) complex. First, biotin carboxylase catalyzes the carboxylation of biotin on its carrier protein (BCCP) and then the CO(2) group is transferred by the carboxyltransferase to acetyl-CoA to form malonyl-CoA. The chain is Acetyl-coenzyme A carboxylase carboxyl transferase subunit alpha from Glaesserella parasuis serovar 5 (strain SH0165) (Haemophilus parasuis).